The sequence spans 406 residues: Exodeoxyribonuclease 7 large subunit (406 aa).

The protein belongs to the XseA family. In terms of assembly, heterooligomer composed of large and small subunits.

The protein resides in the cytoplasm. It carries out the reaction Exonucleolytic cleavage in either 5'- to 3'- or 3'- to 5'-direction to yield nucleoside 5'-phosphates.. Bidirectionally degrades single-stranded DNA into large acid-insoluble oligonucleotides, which are then degraded further into small acid-soluble oligonucleotides. In Desulfitobacterium hafniense (strain Y51), this protein is Exodeoxyribonuclease 7 large subunit.